The following is a 478-amino-acid chain: Septin-4 (478 aa).

The segment at 38–115 (VKDFSGNESC…RSPWGKLDPY (78 aa)) is disordered. Over residues 95–108 (APAPLSPSARPRSP) the composition is skewed to low complexity. 2 positions are modified to phosphoserine: Ser117 and Ser118. A Septin-type G domain is found at 141–414 (KGFDFTLMVA…ENYRAQCIQS (274 aa)). The segment at 151 to 158 (GESGLGKS) is G1 motif. GTP-binding positions include 151-158 (GESGLGKS) and Thr185. The G3 motif stretch occupies residues 208–211 (DTPG). Residues 289–292 (AKAD) form a G4 motif region. GTP is bound at residue 290–298 (KADTLTPPE). Ser325 bears the Phosphoserine mark. Residues Gly348 and Arg363 each contribute to the GTP site. A disordered region spans residues 425-448 (RNKLTRESGTDLPIPAVPPGTDPE). Phosphoserine is present on Ser432. Thr434 carries the post-translational modification Phosphothreonine. The stretch at 446–478 (DPETEKLIREKDEELRRMQEMLHKIQKQMKETY) forms a coiled coil.

Belongs to the TRAFAC class TrmE-Era-EngA-EngB-Septin-like GTPase superfamily. Septin GTPase family. Septins polymerize into heterooligomeric protein complexes that form filaments, and can associate with cellular membranes, actin filaments and microtubules. GTPase activity is required for filament formation. Interacts with SEPTIN8. Component of a septin core octameric complex consisting of SEPTIN12, SEPTIN7, SEPTIN6 and SEPTIN2 or SEPTIN4 in the order 12-7-6-2-2-6-7-12 or 12-7-6-4-4-6-7-12. Interacts with SEPTIN14 (via C-terminus). Interacts with DYRK1A. Interacts with SLC6A3/DAT and SNCA/alpha-synuclein. Interacts with STX1A; in the striatum. Interacts with XIAP (via BIR3 domain) following the induction of apoptosis. Interacts with AREL1 (via HECT domain); in the cytoplasm following induction of apoptosis. In terms of processing, ubiquitinated by AREL1. Phosphorylated by DYRK1A.

Its subcellular location is the cytoplasm. It is found in the cell projection. The protein resides in the cilium. It localises to the flagellum. The protein localises to the cytoplasmic vesicle. Its subcellular location is the secretory vesicle. It is found in the axon. The protein resides in the dendrite. It localises to the perikaryon. The protein localises to the synapse. Its function is as follows. Filament-forming cytoskeletal GTPase. Pro-apoptotic protein involved in LGR5-positive intestinal stem cell and Paneth cell expansion in the intestines, via its interaction with XIAP. May also play a role in the regulation of cell fate in the intestine. Positive regulator of apoptosis involved in hematopoietic stem cell homeostasis; via its interaction with XIAP. Negative regulator of repair and hair follicle regeneration in response to injury, due to inhibition of hair follicle stem cell proliferation, potentially via its interaction with XIAP. Plays an important role in male fertility and sperm motility. During spermiogenesis, essential for the establishment of the annulus (a fibrous ring structure connecting the midpiece and the principal piece of the sperm flagellum) which is a requisite for the structural and mechanical integrity of the sperm. Involved in the migration of cortical neurons and the formation of neuron leading processes during embryonic development. Required for dopaminergic metabolism in presynaptic autoreceptors; potentially via activity as a presynaptic scaffold protein. The protein is Septin-4 of Pongo abelii (Sumatran orangutan).